The sequence spans 91 residues: C-C motif chemokine 5 (91 aa).

Residues 1–23 form the signal peptide; the sequence is MKVSATAFAVLLMAAALCAPASA. 2 cysteine pairs are disulfide-bonded: Cys-33–Cys-57 and Cys-34–Cys-73.

It belongs to the intercrine beta (chemokine CC) family.

It is found in the secreted. Its function is as follows. Chemoattractant for blood monocytes, memory T-helper cells and eosinophils. Causes the release of histamine from basophils and activates eosinophils. May activate several chemokine receptors including CCR1, CCR3, CCR4 and CCR5. May also be an agonist of the G protein-coupled receptor GPR75. Together with GPR75, may play a role in neuron survival through activation of a downstream signaling pathway involving the PI3, Akt and MAP kinases. By activating GPR75 may also play a role in insulin secretion by islet cells. The protein is C-C motif chemokine 5 (CCL5) of Bos taurus (Bovine).